A 165-amino-acid polypeptide reads, in one-letter code: Xanthine-guanine phosphoribosyltransferase (165 aa).

Residues 41–42 (RG) and 98–106 (DDLTDTGKT) contribute to the 5-phospho-alpha-D-ribose 1-diphosphate site. Asp-99 provides a ligand contact to Mg(2+). Residues Asp-102 and Ile-145 each contribute to the guanine site. Asp-102 and Ile-145 together coordinate xanthine. GMP-binding positions include 102–106 (DTGKT) and 144–145 (WI).

Belongs to the purine/pyrimidine phosphoribosyltransferase family. XGPT subfamily. Homotetramer. It depends on Mg(2+) as a cofactor.

The protein localises to the cell inner membrane. It catalyses the reaction GMP + diphosphate = guanine + 5-phospho-alpha-D-ribose 1-diphosphate. It carries out the reaction XMP + diphosphate = xanthine + 5-phospho-alpha-D-ribose 1-diphosphate. The enzyme catalyses IMP + diphosphate = hypoxanthine + 5-phospho-alpha-D-ribose 1-diphosphate. It participates in purine metabolism; GMP biosynthesis via salvage pathway; GMP from guanine: step 1/1. Its pathway is purine metabolism; XMP biosynthesis via salvage pathway; XMP from xanthine: step 1/1. Its function is as follows. Purine salvage pathway enzyme that catalyzes the transfer of the ribosyl-5-phosphate group from 5-phospho-alpha-D-ribose 1-diphosphate (PRPP) to the N9 position of the 6-oxopurines guanine and xanthine to form the corresponding ribonucleotides GMP (guanosine 5'-monophosphate) and XMP (xanthosine 5'-monophosphate), with the release of PPi. To a lesser extent, also acts on hypoxanthine. In Agrobacterium fabrum (strain C58 / ATCC 33970) (Agrobacterium tumefaciens (strain C58)), this protein is Xanthine-guanine phosphoribosyltransferase.